The sequence spans 125 residues: Large ribosomal subunit protein bL19 (125 aa).

Belongs to the bacterial ribosomal protein bL19 family.

This protein is located at the 30S-50S ribosomal subunit interface and may play a role in the structure and function of the aminoacyl-tRNA binding site. In Ehrlichia ruminantium (strain Welgevonden), this protein is Large ribosomal subunit protein bL19.